A 547-amino-acid chain; its full sequence is Auxin transporter-like protein 3 (547 aa).

At 1–74 (MASGSSGGGY…DAWFSCASNQ (74 aa)) the chain is on the cytoplasmic side. The helical transmembrane segment at 75 to 92 (VAQVLLTLPYSFAQLGMA) threads the bilayer. The Extracellular portion of the chain corresponds to 93 to 94 (SG). A helical membrane pass occupies residues 95–115 (LLFQLFYGLLGSWTAYLISIL). The Cytoplasmic portion of the chain corresponds to 116 to 151 (YLEYRTRKERDKVDFRNHVIQWFEVLDGLLGRHWRN). A helical transmembrane segment spans residues 152-172 (VGLAFNCTFLLFGSVIQLIGC). The Extracellular portion of the chain corresponds to 173–187 (ASNIYYINDHLDKRT). Residues 188–208 (WTYIFGACCATTVFIPSFHNY) form a helical membrane-spanning segment. Residues 209-211 (RIW) are Cytoplasmic-facing. A helical membrane pass occupies residues 212-232 (SFLGLLMTTYTAWYIAVASLI). Over 233–247 (HGQVEGVAHSGPTSI) the chain is Extracellular. The chain crosses the membrane as a helical span at residues 248 to 268 (VLYFTGATNILYTFGGHAVTV). Over 269–281 (EIMHAMWRPQKFK) the chain is Cytoplasmic. The helical transmembrane segment at 282–302 (AIYLLATVYVLTLTLPSASAA) threads the bilayer. Over 303-329 (YWAFGDALLTHSNALALLPRTPWRDAA) the chain is Extracellular. Residues 330 to 350 (VVLMLIHQFITFGFACTPLYF) form a helical membrane-spanning segment. At 351–371 (VWEKLVGLHGCPSLCKRAAAR) the chain is on the cytoplasmic side. The chain crosses the membrane as a helical span at residues 372-392 (LPVVLPIWFLAIIFPFFGPIN). Residue Ser393 is a topological domain, extracellular. A helical transmembrane segment spans residues 394-414 (AVGSLLVSFTVYIIPSLAYMV). Over 415-440 (TFRSPQSRQNAVERPPRFAGGWTGAY) the chain is Cytoplasmic. The helical transmembrane segment at 441–461 (VINSFVVAWVLVVGFGFGGWA) threads the bilayer. At 462–547 (SITNFVHQVD…HHHRHHRHGL (86 aa)) the chain is on the extracellular side. The N-linked (GlcNAc...) asparagine glycan is linked to Asn509.

The protein belongs to the amino acid/polyamine transporter 2 family. Amino acid/auxin permease (AAAP) (TC 2.A.18.1) subfamily.

The protein localises to the cell membrane. Carrier protein involved in proton-driven auxin influx. May mediate the formation of auxin gradient from developing leaves (site of auxin biosynthesis) to tips. The chain is Auxin transporter-like protein 3 from Oryza sativa subsp. japonica (Rice).